The sequence spans 275 residues: Formamidopyrimidine-DNA glycosylase (275 aa).

Residue proline 2 is the Schiff-base intermediate with DNA of the active site. The active-site Proton donor is glutamate 3. Lysine 60 (proton donor; for beta-elimination activity) is an active-site residue. Residues histidine 93 and arginine 112 each coordinate DNA. Residues 240-274 (FVYGRKDEPCKKCGSPIEKTVVGGRGTHFCIKCQK) form an FPG-type zinc finger. The Proton donor; for delta-elimination activity role is filled by arginine 264.

This sequence belongs to the FPG family. Monomer. It depends on Zn(2+) as a cofactor.

The enzyme catalyses Hydrolysis of DNA containing ring-opened 7-methylguanine residues, releasing 2,6-diamino-4-hydroxy-5-(N-methyl)formamidopyrimidine.. It catalyses the reaction 2'-deoxyribonucleotide-(2'-deoxyribose 5'-phosphate)-2'-deoxyribonucleotide-DNA = a 3'-end 2'-deoxyribonucleotide-(2,3-dehydro-2,3-deoxyribose 5'-phosphate)-DNA + a 5'-end 5'-phospho-2'-deoxyribonucleoside-DNA + H(+). Involved in base excision repair of DNA damaged by oxidation or by mutagenic agents. Acts as a DNA glycosylase that recognizes and removes damaged bases. Has a preference for oxidized purines, such as 7,8-dihydro-8-oxoguanine (8-oxoG). Has AP (apurinic/apyrimidinic) lyase activity and introduces nicks in the DNA strand. Cleaves the DNA backbone by beta-delta elimination to generate a single-strand break at the site of the removed base with both 3'- and 5'-phosphates. This chain is Formamidopyrimidine-DNA glycosylase, found in Bacillus licheniformis (strain ATCC 14580 / DSM 13 / JCM 2505 / CCUG 7422 / NBRC 12200 / NCIMB 9375 / NCTC 10341 / NRRL NRS-1264 / Gibson 46).